Here is a 76-residue protein sequence, read N- to C-terminus: Esculentin-2MT2 (76 aa).

Residues 1–22 (MFTLKKSMLLLFFLGTISLSLC) form the signal peptide. Positions 23–37 (EEERSADEDDGEKEV) are cleaved as a propeptide — removed in mature form. A disulfide bridge connects residues Cys70 and Cys76.

It belongs to the frog skin active peptide (FSAP) family. Esculentin subfamily. Expressed by the skin glands.

Its subcellular location is the secreted. Antimicrobial peptide. Active against a variety of Gram-negative and Gram-positive bacterial strains. Active against fungi. Shows strong hemolytic activity against human erythrocytes. The protein is Esculentin-2MT2 of Amolops mantzorum (Sichuan torrent frog).